The chain runs to 194 residues: Large ribosomal subunit protein uL24c (194 aa).

A chloroplast-targeting transit peptide spans 1–50 (MVAMAMASLQSSMSSLSLSSNSFLGQPLSPITLSPFLQGKPTEKKCLIVM).

It belongs to the universal ribosomal protein uL24 family. Part of the 50S ribosomal subunit.

It is found in the plastid. The protein resides in the chloroplast. Its function is as follows. One of two assembly initiator proteins, it binds directly to the 5'-end of the 23S rRNA, where it nucleates assembly of the 50S subunit. This Pisum sativum (Garden pea) protein is Large ribosomal subunit protein uL24c (RPL24).